A 199-amino-acid polypeptide reads, in one-letter code: Riboflavin synthase (199 aa).

2 Lumazine-binding repeats span residues 1 to 95 (MFSG…IGGH) and 96 to 188 (FVSG…VDTI). 2,4-dihydroxypteridine-binding positions include 4–6 (GII), 46–48 (CLT), 60–65 (DVTEET), 99–101 (GHV), K130, 139–141 (SLT), and 153–158 (SLIPET).

In terms of assembly, homotrimer.

The enzyme catalyses 2 6,7-dimethyl-8-(1-D-ribityl)lumazine + H(+) = 5-amino-6-(D-ribitylamino)uracil + riboflavin. It functions in the pathway cofactor biosynthesis; riboflavin biosynthesis; riboflavin from 2-hydroxy-3-oxobutyl phosphate and 5-amino-6-(D-ribitylamino)uracil: step 2/2. Its function is as follows. Catalyzes the dismutation of two molecules of 6,7-dimethyl-8-ribityllumazine, resulting in the formation of riboflavin and 5-amino-6-(D-ribitylamino)uracil. This chain is Riboflavin synthase (ribE), found in Chlamydia trachomatis serovar D (strain ATCC VR-885 / DSM 19411 / UW-3/Cx).